The sequence spans 432 residues: Adenylosuccinate synthetase (432 aa).

Residues 12 to 18 (GDEGKGK) and 40 to 42 (GHT) contribute to the GTP site. Catalysis depends on D13, which acts as the Proton acceptor. Mg(2+) contacts are provided by D13 and G40. Residues 13–16 (DEGK), 38–41 (NAGH), T128, R142, Q223, T238, and R302 contribute to the IMP site. Catalysis depends on H41, which acts as the Proton donor. 298-304 (TTTGRPR) is a substrate binding site. GTP is bound by residues R304, 330–332 (HLD), and 417–419 (GVG).

Belongs to the adenylosuccinate synthetase family. Homodimer. Mg(2+) serves as cofactor.

It localises to the cytoplasm. It carries out the reaction IMP + L-aspartate + GTP = N(6)-(1,2-dicarboxyethyl)-AMP + GDP + phosphate + 2 H(+). The protein operates within purine metabolism; AMP biosynthesis via de novo pathway; AMP from IMP: step 1/2. Its function is as follows. Plays an important role in the de novo pathway of purine nucleotide biosynthesis. Catalyzes the first committed step in the biosynthesis of AMP from IMP. This chain is Adenylosuccinate synthetase, found in Symbiobacterium thermophilum (strain DSM 24528 / JCM 14929 / IAM 14863 / T).